Consider the following 498-residue polypeptide: ATP synthase subunit beta, chloroplastic (498 aa).

G172–T179 serves as a coordination point for ATP.

Belongs to the ATPase alpha/beta chains family. As to quaternary structure, F-type ATPases have 2 components, CF(1) - the catalytic core - and CF(0) - the membrane proton channel. CF(1) has five subunits: alpha(3), beta(3), gamma(1), delta(1), epsilon(1). CF(0) has four main subunits: a(1), b(1), b'(1) and c(9-12).

The protein localises to the plastid. It localises to the chloroplast thylakoid membrane. The catalysed reaction is ATP + H2O + 4 H(+)(in) = ADP + phosphate + 5 H(+)(out). In terms of biological role, produces ATP from ADP in the presence of a proton gradient across the membrane. The catalytic sites are hosted primarily by the beta subunits. In Morus indica (Mulberry), this protein is ATP synthase subunit beta, chloroplastic.